Consider the following 556-residue polypeptide: Potassium-transporting ATPase potassium-binding subunit (556 aa).

10 consecutive transmembrane segments (helical) span residues 6–26 (AGIA…VPLG), 65–85 (SVLA…LVQG), 133–153 (GLAV…IALV), 176–196 (LRIL…GGAI), 249–269 (PTPW…FSLP), 283–303 (VAIA…TMLL), 378–398 (GLYG…LMVG), 415–435 (LAAS…AIAM), 483–503 (ALGL…LALA), and 526–546 (FVGM…LPIL).

Belongs to the KdpA family. In terms of assembly, the system is composed of three essential subunits: KdpA, KdpB and KdpC.

The protein resides in the cell membrane. Part of the high-affinity ATP-driven potassium transport (or Kdp) system, which catalyzes the hydrolysis of ATP coupled with the electrogenic transport of potassium into the cytoplasm. This subunit binds the extracellular potassium ions and delivers the ions to the membrane domain of KdpB through an intramembrane tunnel. The chain is Potassium-transporting ATPase potassium-binding subunit from Mycolicibacterium smegmatis (strain ATCC 700084 / mc(2)155) (Mycobacterium smegmatis).